Reading from the N-terminus, the 1070-residue chain is DNA-directed RNA polymerase subunit beta (1070 aa).

The protein belongs to the RNA polymerase beta chain family. In terms of assembly, in plastids the minimal PEP RNA polymerase catalytic core is composed of four subunits: alpha, beta, beta', and beta''. When a (nuclear-encoded) sigma factor is associated with the core the holoenzyme is formed, which can initiate transcription.

The protein localises to the plastid. It localises to the chloroplast. The enzyme catalyses RNA(n) + a ribonucleoside 5'-triphosphate = RNA(n+1) + diphosphate. Its function is as follows. DNA-dependent RNA polymerase catalyzes the transcription of DNA into RNA using the four ribonucleoside triphosphates as substrates. The sequence is that of DNA-directed RNA polymerase subunit beta from Lotus japonicus (Lotus corniculatus var. japonicus).